A 166-amino-acid polypeptide reads, in one-letter code: NAD(P)H-quinone oxidoreductase subunit I, chloroplastic (166 aa).

4Fe-4S ferredoxin-type domains lie at 55-84 (GRIHFEFDKCIACEVCVRVCPIDLPVVDWK) and 95-124 (LNYSIDFGICIFCGNCVEYCPTNCLSMTEE). Residues cysteine 64, cysteine 67, cysteine 70, cysteine 74, cysteine 104, cysteine 107, cysteine 110, and cysteine 114 each contribute to the [4Fe-4S] cluster site.

This sequence belongs to the complex I 23 kDa subunit family. As to quaternary structure, NDH is composed of at least 16 different subunits, 5 of which are encoded in the nucleus. [4Fe-4S] cluster serves as cofactor.

The protein resides in the plastid. The protein localises to the chloroplast thylakoid membrane. It carries out the reaction a plastoquinone + NADH + (n+1) H(+)(in) = a plastoquinol + NAD(+) + n H(+)(out). It catalyses the reaction a plastoquinone + NADPH + (n+1) H(+)(in) = a plastoquinol + NADP(+) + n H(+)(out). Functionally, NDH shuttles electrons from NAD(P)H:plastoquinone, via FMN and iron-sulfur (Fe-S) centers, to quinones in the photosynthetic chain and possibly in a chloroplast respiratory chain. The immediate electron acceptor for the enzyme in this species is believed to be plastoquinone. Couples the redox reaction to proton translocation, and thus conserves the redox energy in a proton gradient. This is NAD(P)H-quinone oxidoreductase subunit I, chloroplastic from Espeletia timotensis (Andean giant rosette).